Reading from the N-terminus, the 437-residue chain is Branched-chain amino acid transport system 3 carrier protein (437 aa).

12 helical membrane passes run 9–29 (ILALGFMTFALFVGAGNIIFP), 40–60 (VWLAALGFLITAVGLPVITVI), 79–99 (YAGGLLAAVCYLAVGPLFAIP), 120–140 (ALFVYSLAYFLLALAISLYPG), 155–175 (ILALAILGVAAFLWPAGPIGT), 189–209 (FVNGYLTMDTLAALVFGIVIV), 226–246 (YAIVAGLIAGVGLVLVYVSLF), 277–297 (LGSSFLAGLIALACLVTAVGL), 316–336 (LVIILAGFSFIVSNLGLTKLI), 342–362 (VLTAIYPPCIVLVALSFCIGL), 369–389 (ILAPVMLVSLAFGVLDALKAA), and 399–419 (LLHLPLAEQGLAWLIPSVATL).

This sequence belongs to the branched chain amino acid transporter family.

The protein resides in the cell inner membrane. Functionally, component of the LIV-III transport system for branched-chain amino acids. BraZ is specific for isoleucine and valine. The LIV-III transport system may be H(+)-coupled. This chain is Branched-chain amino acid transport system 3 carrier protein (braZ), found in Pseudomonas aeruginosa (strain ATCC 15692 / DSM 22644 / CIP 104116 / JCM 14847 / LMG 12228 / 1C / PRS 101 / PAO1).